Consider the following 807-residue polypeptide: Nucleolar complex protein 3 homolog (807 aa).

Disordered stretches follow at residues 27–93 (KLKN…DMMD) and 167–191 (EKPV…EVIE). Residues 40-51 (KKYRKEQRKLRQ) are compositionally biased toward basic residues. Positions 52-78 (AVKDAVSKKPIPLEDPKSKRPVKRMER) are enriched in basic and acidic residues. Composition is skewed to acidic residues over residues 79–93 (EEDE…DMMD) and 174–190 (QQEE…EEVI). Residue lysine 332 forms a Glycyl lysine isopeptide (Lys-Gly) (interchain with G-Cter in SUMO2) linkage. Residues 449–489 (FKEKRKTLSRMQRKWKKAEEKLERELREAEASESTEKKLKL) are a coiled coil.

It belongs to the CBF/MAK21 family.

It is found in the nucleus. It localises to the nucleolus. The protein localises to the nucleus speckle. Functionally, may be required for adipogenesis. In Mus musculus (Mouse), this protein is Nucleolar complex protein 3 homolog (Noc3l).